A 169-amino-acid polypeptide reads, in one-letter code: UPF0065 protein in clcB-clcD intergenic region (169 aa).

It belongs to the UPF0065 (bug) family.

The protein localises to the periplasm. The sequence is that of UPF0065 protein in clcB-clcD intergenic region from Pseudomonas knackmussii (strain DSM 6978 / CCUG 54928 / LMG 23759 / B13).